A 219-amino-acid chain; its full sequence is Izumo sperm-egg fusion protein 4 (219 aa).

The first 15 residues, 1 to 15, serve as a signal peptide directing secretion; it reads MALLLCLVGVTAALA. The N-linked (GlcNAc...) asparagine glycan is linked to N206.

Belongs to the Izumo family.

It localises to the secreted. This Macaca fascicularis (Crab-eating macaque) protein is Izumo sperm-egg fusion protein 4 (IZUMO4).